Here is a 516-residue protein sequence, read N- to C-terminus: Extracellular endo-inulinase inuB (516 aa).

An N-terminal signal peptide occupies residues 1-25 (MLNPKVAYMVWMTCLGLTLPSQAQS). Residues 40–43 (WMNE), glutamine 59, tryptophan 67, and 99–100 (FT) each bind substrate. Residue glutamate 43 is part of the active site. N-linked (GlcNAc...) asparagine glycosylation occurs at asparagine 109. Residues 175-176 (RD) and glutamate 233 each bind substrate. Asparagine 372, asparagine 419, and asparagine 424 each carry an N-linked (GlcNAc...) asparagine glycan.

Belongs to the glycosyl hydrolase 32 family.

The protein localises to the secreted. The enzyme catalyses Endohydrolysis of (2-&gt;1)-beta-D-fructosidic linkages in inulin.. Endo-inulinase involved in utilization of the plant storage polymer inulin, consisting of fructooligosaccharides with a degree of polymerization (DP) value from 2 to 60. In Aspergillus niger, this protein is Extracellular endo-inulinase inuB (inuB).